We begin with the raw amino-acid sequence, 363 residues long: Protein-glutamate methylesterase/protein-glutamine glutaminase 3 (363 aa).

The Response regulatory domain occupies 8 to 125 (KVLCVDDSAL…RDGMLDYAEK (118 aa)). D59 bears the 4-aspartylphosphate mark. The CheB-type methylesterase domain occupies 164–356 (LVSTEKLIII…RRVMARLATM (193 aa)). Active-site residues include S176, H202, and D298.

Belongs to the CheB family. Post-translationally, phosphorylated by CheA. Phosphorylation of the N-terminal regulatory domain activates the methylesterase activity.

It localises to the cytoplasm. The catalysed reaction is [protein]-L-glutamate 5-O-methyl ester + H2O = L-glutamyl-[protein] + methanol + H(+). It carries out the reaction L-glutaminyl-[protein] + H2O = L-glutamyl-[protein] + NH4(+). Functionally, involved in chemotaxis. Part of a chemotaxis signal transduction system that modulates chemotaxis in response to various stimuli. Catalyzes the demethylation of specific methylglutamate residues introduced into the chemoreceptors (methyl-accepting chemotaxis proteins or MCP) by CheR. Also mediates the irreversible deamidation of specific glutamine residues to glutamic acid. The protein is Protein-glutamate methylesterase/protein-glutamine glutaminase 3 of Burkholderia lata (strain ATCC 17760 / DSM 23089 / LMG 22485 / NCIMB 9086 / R18194 / 383).